The chain runs to 380 residues: Cytochrome b (380 aa).

The next 4 helical transmembrane spans lie at 34–54, 78–99, 114–134, and 179–199; these read FGSLLGLCLITQILTGLFLAM, WLLRNVHANGASLFFICMYCHI, WNVGVILFLVTVLTAFVGYVL, and FFAFHFLFPFIIAALAIIDLV. 2 residues coordinate heme b: His-84 and His-98. His-183 lines the heme b pocket. His-202 lines the a ubiquinone pocket. 4 consecutive transmembrane segments (helical) span residues 227–247, 289–309, 321–341, and 348–369; these read TKDTVGFIALIAALFVLALLF, LGGVIALVAAILVLFLMPLLN, LSQATFWILVATFFVLTWIGS, and FVLIGQIASLLYFSLFIFGFPL.

It belongs to the cytochrome b family. In terms of assembly, the main subunits of complex b-c1 are: cytochrome b, cytochrome c1 and the Rieske protein. The cofactor is heme b.

The protein resides in the mitochondrion inner membrane. Its function is as follows. Component of the ubiquinol-cytochrome c reductase complex (complex III or cytochrome b-c1 complex) that is part of the mitochondrial respiratory chain. The b-c1 complex mediates electron transfer from ubiquinol to cytochrome c. Contributes to the generation of a proton gradient across the mitochondrial membrane that is then used for ATP synthesis. In Paracentrotus lividus (Common sea urchin), this protein is Cytochrome b (MT-CYB).